The sequence spans 397 residues: Sporulation-specific protein 20 (397 aa).

Residues 1–26 (MGFRKILASKSHHSRHHNQHHKNLKL) form a disordered region. The interval 4–50 (RKILASKSHHSRHHNQHHKNLKLQNHRYVLISNITGSHETKYLSPFR) is inhibitory region. A compositionally biased stretch (basic residues) spans 10-26 (KSHHSRHHNQHHKNLKL). Positions 51–95 (MDNCSGSRRRDRLHVKLKSLRNKIHKQLHPNCRFDDATKTSDDKC) are positive regulatory region. The t-SNARE coiled-coil homology domain occupies 330-392 (NQMEIDLYGN…QAKRYRLEKV (63 aa)).

It belongs to the SNAP-25 family. As to quaternary structure, interacts with the t-SNARE SSO1 and the v-SNARE SNC2.

The protein resides in the cell membrane. The protein localises to the prospore membrane. Functionally, required to maintain the prospore membrane to the nucleus during sporulation in order to capture the daughter nuclei and form the spores. Mediates the fusion of exocytic vesicles with the plasma membrane during sporulation through its interactions with the t-SNARE SSO1 and v-SNARE SNC2. This is Sporulation-specific protein 20 (SPO20) from Saccharomyces cerevisiae (strain ATCC 204508 / S288c) (Baker's yeast).